We begin with the raw amino-acid sequence, 2122 residues long: Unique GC organizer UGO (2122 aa).

Transmembrane regions (helical) follow at residues 19–39, 50–70, 82–102, 115–135, and 145–165; these read FAVA…TNSL, LFGM…FVIV, TYIM…MQLI, VLTF…VLIG, and VVCS…DVGL. Disordered stretches follow at residues 337-403, 422-532, 565-591, 627-762, 785-815, 848-870, 903-949, 999-1046, 1068-1308, 1328-1368, 1515-1540, 1560-1608, and 1639-1727; these read AALH…HRSA, FRGL…GPFV, DLRE…SGLQ, HRRG…GRAN, HAAS…CSAS, MSRR…RAER, SKEG…ASAN, RNET…LHSR, PSDL…HEAV, AGLS…SEEE, ANSS…AASA, AAEH…TPHT, and QGLG…TFFG. Polar residues predominate over residues 363-374; it reads RSNTLRGCSGQV. 3 stretches are compositionally biased toward basic and acidic residues: residues 503–525, 565–585, and 632–645; these read LRMD…DPAK, DLRE…HAAA, and GARD…RGEP. Basic residues predominate over residues 672–687; the sequence is RLSRSRRHKTRTYRRG. Low complexity predominate over residues 690 to 699; it reads SDGTTAGTSD. The span at 707–720 shows a compositional bias: acidic residues; that stretch reads LEDEGSDSGQESES. Positions 725–735 are enriched in basic residues; it reads RRRMRSSRNRR. Low complexity predominate over residues 741 to 750; sequence EDSSSGTSVR. Basic and acidic residues predominate over residues 751–760; sequence SEGRHCREGR. Asparagine 762 is a glycosylation site (N-linked (GlcNAc...) asparagine). A compositionally biased stretch (basic residues) spans 848 to 860; it reads MSRRRRREGKSRP. 2 stretches are compositionally biased toward polar residues: residues 999 to 1011 and 1072 to 1097; these read RNET…SPAT and SLFT…SARI. Asparagine 1000 is a glycosylation site (N-linked (GlcNAc...) asparagine). Asparagine 1165 carries N-linked (GlcNAc...) asparagine glycosylation. Positions 1220–1261 are enriched in basic and acidic residues; that stretch reads SREDLVGEADSHVSPEKEVFVSSRREKREEQVPRSRREERRD. The span at 1262 to 1276 shows a compositional bias: basic residues; that stretch reads RRGRRWRRGRRRRKA. Basic and acidic residues-rich tracts occupy residues 1277–1289 and 1345–1359; these read RECS…RDSS and GDMR…HSDG. The span at 1515-1527 shows a compositional bias: polar residues; sequence ANSSTAVSSSLPD. Asparagine 1516 carries N-linked (GlcNAc...) asparagine glycosylation. Composition is skewed to low complexity over residues 1528-1540 and 1597-1608; these read STAW…AASA and TQTPQTPQTPHT. The segment covering 1684-1693 has biased composition (polar residues); that stretch reads LSATPSTRLQ. Transmembrane regions (helical) follow at residues 1859–1879, 1956–1976, 1989–2009, 2017–2037, and 2040–2060; these read VAWL…LLRL, MLAL…WHLI, IIPA…ILAV, IFLL…PPGV, and VQLF…GQLF. A disordered region spans residues 2102–2122; it reads DEGSEDEVSMGSGHLVGDRSA.

As to quaternary structure, interacts with guanylate cyclase GC; the interaction regulates guanylate cyclase GC trafficking and catalytic activity.

It is found in the cell membrane. Functionally, in tachyzoites, required for the cellular trafficking of guanylate cyclase GC to the cell membrane and for GC guanylate cyclase activity. The protein is Unique GC organizer UGO of Toxoplasma gondii (strain ATCC 50853 / GT1).